We begin with the raw amino-acid sequence, 299 residues long: Pseudouridine-5'-phosphate glycosidase (299 aa).

The active-site Proton donor is Glu23. Substrate-binding residues include Lys84 and Val104. Asp136 is a binding site for Mn(2+). 138–140 lines the substrate pocket; that stretch reads SAD. Residue Lys157 is the Nucleophile of the active site.

The protein belongs to the pseudouridine-5'-phosphate glycosidase family. In terms of assembly, homotrimer. Mn(2+) is required as a cofactor.

The catalysed reaction is D-ribose 5-phosphate + uracil = psi-UMP + H2O. Catalyzes the reversible cleavage of pseudouridine 5'-phosphate (PsiMP) to ribose 5-phosphate and uracil. Functions biologically in the cleavage direction, as part of a pseudouridine degradation pathway. This Solibacter usitatus (strain Ellin6076) protein is Pseudouridine-5'-phosphate glycosidase.